Consider the following 422-residue polypeptide: Telomerase-associated protein of 50 kDa (422 aa).

Component of the telomerase holoenzyme complex, composed of the catalytic core (the catalytic subunit TERT, the telomerase RNA template component TER and TAP65/p65), which is associated with two heterotrimeric subcomplexes: (i) the replication protein A (RPA)-related subcomplex, composed of TEB1, RPA2/TEB2 and RPA3/TEB3 and (ii) the CST-like subcomplex, composed of TAP75/p75, TAP45/p45 and TAP19/p19. TEB1 and the CST-like subcomplex are tethered to the catalytic core by TAP50/p50.

It is found in the chromosome. Its subcellular location is the telomere. In terms of biological role, tethering component of the holoenzyme telomerase ribonucleoprotein (RNP) complex. Telomerase is an essential ribonucleoprotein enzyme that copies new telomeric repeats onto chromosome ends by repetitively synthesizing the short telomere-repeat sequence 5'-TTGGGG-3' using an RNA template component TER. In the telomerase holoenzyme complex, acts as a hub that anchors the two heterotrimeric subcomplexes with the catalytic core. This chain is Telomerase-associated protein of 50 kDa, found in Tetrahymena thermophila (strain SB210).